The following is a 229-amino-acid chain: Potassium/proton antiporter CemA (229 aa).

Transmembrane regions (helical) follow at residues 6-26 (AFIPFFYFTSIVFLPWLISLC), 107-127 (ILHFSTNLISFVILSGYSFWA), and 189-209 (ILSGLVSTFPVILDTIFKYWI).

The protein belongs to the CemA family.

The protein localises to the plastid. Its subcellular location is the chloroplast inner membrane. It carries out the reaction K(+)(in) + H(+)(out) = K(+)(out) + H(+)(in). Contributes to K(+)/H(+) antiport activity by supporting proton efflux to control proton extrusion and homeostasis in chloroplasts in a light-dependent manner to modulate photosynthesis. Prevents excessive induction of non-photochemical quenching (NPQ) under continuous-light conditions. Indirectly promotes efficient inorganic carbon uptake into chloroplasts. In Crucihimalaya wallichii (Rock-cress), this protein is Potassium/proton antiporter CemA.